A 352-amino-acid polypeptide reads, in one-letter code: Ion-translocating oxidoreductase complex subunit D (352 aa).

The next 5 membrane-spanning stretches (helical) occupy residues Ile20–Gly40, Gly42–Leu62, Ala78–Ala109, Pro123–Leu143, and Ile148–Thr168. Thr187 carries the FMN phosphoryl threonine modification. 5 helical membrane passes run Leu215–Leu235, Trp242–Phe262, Leu267–Leu287, Leu301–Pro321, and Asp322–Thr342.

The protein belongs to the NqrB/RnfD family. As to quaternary structure, the complex is composed of six subunits: RsxA, RsxB, RsxC, RsxD, RsxE and RsxG. Requires FMN as cofactor.

The protein resides in the cell inner membrane. In terms of biological role, part of a membrane-bound complex that couples electron transfer with translocation of ions across the membrane. Required to maintain the reduced state of SoxR. The protein is Ion-translocating oxidoreductase complex subunit D of Escherichia coli (strain SMS-3-5 / SECEC).